Consider the following 138-residue polypeptide: Putative pre-16S rRNA nuclease (138 aa).

The protein belongs to the YqgF nuclease family.

The protein localises to the cytoplasm. Its function is as follows. Could be a nuclease involved in processing of the 5'-end of pre-16S rRNA. In Cronobacter sakazakii (strain ATCC BAA-894) (Enterobacter sakazakii), this protein is Putative pre-16S rRNA nuclease.